We begin with the raw amino-acid sequence, 392 residues long: tRNA (guanine-N(7)-)-methyltransferase (392 aa).

S-adenosyl-L-methionine is bound by residues E123, E148, and D175. The substrate site is built by K201 and D231.

Belongs to the class I-like SAM-binding methyltransferase superfamily. TrmB family.

The enzyme catalyses guanosine(46) in tRNA + S-adenosyl-L-methionine = N(7)-methylguanosine(46) in tRNA + S-adenosyl-L-homocysteine. It functions in the pathway tRNA modification; N(7)-methylguanine-tRNA biosynthesis. Catalyzes the formation of N(7)-methylguanine at position 46 (m7G46) in tRNA. In Campylobacter jejuni subsp. jejuni serotype O:6 (strain 81116 / NCTC 11828), this protein is tRNA (guanine-N(7)-)-methyltransferase.